The primary structure comprises 809 residues: BTB/POZ domain-containing protein At2g30600 (809 aa).

2 consecutive BTB domains span residues 211-273 and 351-420; these read SDTV…QILE and SDIK…NMED. The region spanning 466–537 is the BACK domain; it reads VVSSISSCKL…LMWCMKAEES (72 aa).

It participates in protein modification; protein ubiquitination. May act as a substrate-specific adapter of an E3 ubiquitin-protein ligase complex (CUL3-RBX1-BTB) which mediates the ubiquitination and subsequent proteasomal degradation of target proteins. The protein is BTB/POZ domain-containing protein At2g30600 of Arabidopsis thaliana (Mouse-ear cress).